The primary structure comprises 332 residues: Probable cation efflux system protein MT2084 (332 aa).

A run of 5 helical transmembrane segments spans residues 46–66 (ISLLVLGLTALIQIVIVVMSG), 75–95 (IHNFADALTAVPLWIAFALGA), 113–133 (AGSFVVAMITMSAIIAGYEAI), 145–165 (VGWVALAGLVGFIGNEWVALY), and 202–222 (VALGFPLADPIVGLLITAAIL).

The protein belongs to the cation diffusion facilitator (CDF) transporter (TC 2.A.4) family.

Its subcellular location is the cell membrane. This Mycobacterium tuberculosis (strain CDC 1551 / Oshkosh) protein is Probable cation efflux system protein MT2084.